The sequence spans 449 residues: Required for meiotic nuclear division protein 1 homolog (449 aa).

The N-terminal 16 residues, 1-16 (MPATLLRAVAGSHRVL), are a transit peptide targeting the mitochondrion.

It belongs to the RMD1/sif2 family. In terms of assembly, homooligomer.

It is found in the mitochondrion. Functionally, required for mitochondrial translation, possibly by coordinating the assembly or maintenance of the mitochondrial ribosome. The sequence is that of Required for meiotic nuclear division protein 1 homolog (RMND1) from Pongo abelii (Sumatran orangutan).